Here is a 314-residue protein sequence, read N- to C-terminus: Olfactory receptor 1E1 (314 aa).

Residues 1–25 lie on the Extracellular side of the membrane; the sequence is MMGQNQTSISDFLLLGLPIQPEQQN. The N-linked (GlcNAc...) asparagine glycan is linked to N5. The helical transmembrane segment at 26 to 49 threads the bilayer; it reads LCYALFLAMYLTTLLGNLLIIVLI. The Cytoplasmic portion of the chain corresponds to 50–57; it reads RLDSHLHT. A helical membrane pass occupies residues 58–79; it reads PMYLFLSNLSFSDLCFSSVTIP. Residues 80 to 100 are Extracellular-facing; sequence KLLQNMQNQDPSIPYADCLTQ. A disulfide bridge links C97 with C189. The chain crosses the membrane as a helical span at residues 101–120; the sequence is MYFFLLFGDLESFLLVAMAY. The Cytoplasmic segment spans residues 121–139; it reads DRYVAICFPLHYTAIMSPM. A helical transmembrane segment spans residues 140 to 158; it reads LCLSVVALSWVLTTFHAML. At 159–195 the chain is on the extracellular side; that stretch reads HTLLMARLCFCADNVIPHFFCDMSALLKLACSDTRVN. A helical transmembrane segment spans residues 196 to 219; that stretch reads EWVIFIMGGLILVIPFLLILGSYA. The Cytoplasmic portion of the chain corresponds to 220–236; that stretch reads RIVSSILKVPSSKGICK. Residues 237–259 traverse the membrane as a helical segment; that stretch reads ALSTCGSHLSVVSLFYGTVIGLY. The Extracellular portion of the chain corresponds to 260 to 272; it reads LCPSANSSTLKDT. A helical membrane pass occupies residues 273–292; the sequence is VMAMIYTVVTPMLNPFIYSL. Over 293–314 the chain is Cytoplasmic; sequence RNRDMKGALSRVIHQKKTFFSL.

This sequence belongs to the G-protein coupled receptor 1 family.

It localises to the cell membrane. Functionally, odorant receptor. This chain is Olfactory receptor 1E1 (OR1E1), found in Pan troglodytes (Chimpanzee).